Reading from the N-terminus, the 92-residue chain is Secreted RxLR effector protein 21 (92 aa).

An N-terminal signal peptide occupies residues M1 to A21. The short motif at R30–R33 is the RxLR element.

The protein belongs to the RxLR effector family.

It localises to the secreted. It is found in the host nucleus. Its subcellular location is the host cytoplasm. In terms of biological role, secreted effector that completely suppresses the host cell death induced by cell death-inducing proteins. This Plasmopara viticola (Downy mildew of grapevine) protein is Secreted RxLR effector protein 21.